The chain runs to 49 residues: Small ribosomal subunit protein eS31 (49 aa).

Positions 21, 24, 39, and 42 each coordinate Zn(2+). The segment at 21–42 (CPRCGPGTFLADHKNRLTCGKC) adopts a C4-type zinc-finger fold.

It belongs to the eukaryotic ribosomal protein eS31 family. Part of the 30S ribosomal subunit. Requires Zn(2+) as cofactor.

This Methanosarcina barkeri (strain Fusaro / DSM 804) protein is Small ribosomal subunit protein eS31.